The chain runs to 116 residues: Iron-sulfur cluster insertion protein ErpA (116 aa).

3 residues coordinate iron-sulfur cluster: Cys-44, Cys-108, and Cys-110.

Belongs to the HesB/IscA family. Homodimer. Iron-sulfur cluster is required as a cofactor.

Its function is as follows. Required for insertion of 4Fe-4S clusters for at least IspG. In Shewanella sp. (strain ANA-3), this protein is Iron-sulfur cluster insertion protein ErpA.